Here is a 361-residue protein sequence, read N- to C-terminus: MAQAGGAGAGAWGRRGAGAGAGPERAPWRWAPALLWLAAATAAAAAAGDPSRRQWPVPYKRFSFRPEPDPYCQAKYTFCPTGSPIPVMKDDDVIEVFRLQAPVWEFKYGDLLGHLKIMHDAIGFRSTLTEKNYTMEWYELFQLGNCTFPHLRPEMNAPFWCNQGAACFFEGIDDNHWKENGTLVLVATISGGMFNKMAKWVKQDNETGIYYETWTVQASPKKEAEKWFESYDCSKFVLRTYEKLAELGADFKKIETNYTRIFLYSGEPTYLGNETSVFGPTGNKTLALAIKKFYYPFKPHLSTKEFLLSLLQIFDAVVIHREFYLFYNFEYWFLPMKSPFIKITYEEIPLPNRKNRTLSGL.

A compositionally biased stretch (gly residues) spans 1-21 (MAQAGGAGAGAWGRRGAGAGA). Residues 1–24 (MAQAGGAGAGAWGRRGAGAGAGPE) are disordered. Topologically, residues 1–30 (MAQAGGAGAGAWGRRGAGAGAGPERAPWRW) are cytoplasmic. Residues 31 to 48 (APALLWLAAATAAAAAAG) traverse the membrane as a helical; Signal-anchor for type II membrane protein segment. Residues 49-361 (DPSRRQWPVP…NRKNRTLSGL (313 aa)) are Lumenal-facing. 2 cysteine pairs are disulfide-bonded: Cys-72–Cys-161 and Cys-79–Cys-167. Catalysis depends on His-119, which acts as the Proton acceptor. N-linked (GlcNAc...) asparagine glycans are attached at residues Asn-132, Asn-145, Asn-180, and Asn-205. The active-site Nucleophile; Acyl-thioester intermediate is Cys-233. N-linked (GlcNAc...) asparagine glycans are attached at residues Asn-257, Asn-273, and Asn-283. Residues 306–345 (FLLSLLQIFDAVVIHREFYLFYNFEYWFLPMKSPFIKITY) are membrane-anchoring. The N-linked (GlcNAc...) asparagine glycan is linked to Asn-355.

It belongs to the CLN5 family. Multimer. Interacts with SORT1, RAB5A and RAB7A. Interacts with PPT1, TPP1, CLN3, CLN6, CLN8, ATP5F1A and ATP5F1B. In terms of processing, N-glycosylated with both high mannose and complex type sugars. Glycosylation is important for proper folding and trafficking to the lysosomes. The type II membrane signal anchor is proteolytically cleaved to produce a mature form that is transported to the lysosomes (Bis(monoacylglycero)phosphate synthase CLN5, secreted form). Post-translationally, can undergo proteolytic cleavage at the C-terminus, probably by a cysteine protease and may involve the removal of approximately 10-15 residues from the C-terminal end.

The protein localises to the lysosome. The protein resides in the membrane. It catalyses the reaction S-hexadecanoyl-L-cysteinyl-[protein] + H2O = L-cysteinyl-[protein] + hexadecanoate + H(+). It carries out the reaction 2 1-acyl-sn-glycero-3-phospho-(1'-sn-glycerol) = 1-acyl-sn-glycero-3-phospho-(3'-acyl-sn-1'-glycerol) + sn-glycero-3-phospho-(1'-sn-glycerol). The enzyme catalyses 2 1-(9Z-octadecenoyl)-sn-glycero-3-phospho-(1'-sn-glycerol) = 1-(9Z-octadecenoyl)-sn-glycero-3-phospho-(3'-(9Z-octadecenoyl)-1'-sn-glycerol) + sn-glycero-3-phospho-(1'-sn-glycerol). The catalysed reaction is 2 1-octadecanoyl-sn-glycero-3-phospho-(1'-sn-glycerol) = 1-octadecanoyl-sn-glycero-3-phospho-(3'-octadecanoyl-1'-sn-glycerol) + sn-glycero-3-phospho-(1'-sn-glycerol). It catalyses the reaction 2 1-hexadecanoyl-sn-glycero-3-phospho-(1'-sn-glycerol) = 1-hexadecanoyl-sn-glycero-3-phospho-(3'-hexadecanoyl-1'-sn-glycerol) + sn-glycero-3-phospho-(1'-sn-glycerol). It carries out the reaction 2 1-tetradecanoyl-sn-glycero-3-phospho-(1'-sn-glycerol) = 1-tetradecanoyl-sn-glycero-3-phospho-(3'-tetradecanoyl-1'-sn-glycerol) + sn-glycero-3-phospho-(1'-sn-glycerol). Its function is as follows. Catalyzes the synthesis of bis(monoacylglycero)phosphate (BMP) via transacylation of 2 molecules of lysophosphatidylglycerol (LPG). BMP also known as lysobisphosphatidic acid plays a key role in the formation of intraluminal vesicles and in maintaining intracellular cholesterol homeostasis. Can use only LPG as the exclusive lysophospholipid acyl donor for base exchange and displays BMP synthase activity towards various LPGs (LPG 14:0, LPG 16:0, LPG 18:0, LPG 18:1) with a higher preference for longer chain lengths. Plays a role in influencing the retrograde trafficking of lysosomal sorting receptors SORT1 and IGF2R from the endosomes to the trans-Golgi network by controlling the recruitment of retromer complex to the endosomal membrane. Regulates the localization and activation of RAB7A which is required to recruit the retromer complex to the endosomal membrane. In terms of biological role, exhibits palmitoyl protein thioesterase (S-depalmitoylation) activity in vitro and most likely plays a role in protein S-depalmitoylation. The chain is Bis(monoacylglycero)phosphate synthase CLN5 (CLN5) from Ovis aries (Sheep).